Here is a 593-residue protein sequence, read N- to C-terminus: ATP-dependent lipid A-core flippase (593 aa).

6 consecutive transmembrane segments (helical) span residues 33–55 (YIFL…YGFG), 67–87 (ILML…VGSF), 146–166 (AIIT…VMFV), 169–189 (WQLS…ISII), 258–278 (VIQI…AIFG), and 284–304 (GSSW…AAIL). In terms of domain architecture, ABC transmembrane type-1 spans 38–319 (ADASMIYLIN…LTKVNVVIQK (282 aa)). An ABC transporter domain is found at 351-585 (VTIKDLSFAF…GGLYTGSINR (235 aa)). 383 to 390 (GKSGSGKT) is an ATP binding site.

This sequence belongs to the ABC transporter superfamily. Lipid exporter (TC 3.A.1.106) family. In terms of assembly, homodimer.

The protein resides in the cell membrane. The enzyme catalyses ATP + H2O + lipid A-core oligosaccharideSide 1 = ADP + phosphate + lipid A-core oligosaccharideSide 2.. Involved in lipopolysaccharide (LPS) biosynthesis. Translocates lipid A-core from the inner to the outer leaflet of the inner membrane. Transmembrane domains (TMD) form a pore in the inner membrane and the ATP-binding domain (NBD) is responsible for energy generation. This Francisella novicida protein is ATP-dependent lipid A-core flippase.